A 426-amino-acid chain; its full sequence is Outer capsid protein P8 (426 aa).

The protein belongs to the phytoreovirus outer capsid protein P8 family. In terms of assembly, homotrimer. Homomultimer.

The protein localises to the virion. Its subcellular location is the host cytoplasm. Capsid protein which self-assembles to form the outer icosahedral capsid with a T=13 symmetry, about 70 nm in diameter and consisting of 260 P8 trimers. Mediates the secretion of assembled virus-like particles from host insect cells. The protein is Outer capsid protein P8 of Nephotettix cincticeps (Green rice leafhopper).